The primary structure comprises 821 residues: E3 ubiquitin-protein ligase RSP5 (821 aa).

Positions 1–112 (MGSNLPAQPN…QMGGDEMLTR (112 aa)) constitute a C2 domain. Composition is skewed to polar residues over residues 133 to 144 (TNLSTPNPNQAN) and 188 to 201 (LNPQRVPSATRPTS). 2 disordered regions span residues 133–239 (TNLS…GWER) and 255–359 (RTTT…YFVD). Residues 202 to 217 (QIAPPNGAPPIANGQG) are compositionally biased toward low complexity. The region spanning 231–264 (GRLPAGWERREDNLGRTYYVDHNTRTTTWNRPSA) is the WW 1 domain. Positions 255 to 272 (RTTTWNRPSANYNEQTQR) are enriched in polar residues. The segment covering 281-296 (LERRAHQNRMLPEDRT) has biased composition (basic and acidic residues). The segment covering 297 to 312 (GASSPNLSETQPQAQT) has biased composition (polar residues). The span at 320 to 339 (ASNSNVVSMMATGATTAGTG) shows a compositional bias: low complexity. 2 consecutive WW domains span residues 339 to 372 (GELPPGWEQRTTPEGRPYFVDHNTRTTTWVDPRR) and 399 to 432 (GPLPSGWEMRLTNTARVYFVDHNTKTTTWDDPRL). Residues 488–821 (SASDLKKRLM…VEETLGFGQE (334 aa)) enclose the HECT domain. The Glycyl thioester intermediate role is filled by Cys-789.

This sequence belongs to the RSP5/NEDD4 family. As to quaternary structure, interacts with apyA and creD.

Its subcellular location is the cytoplasm. The enzyme catalyses S-ubiquitinyl-[E2 ubiquitin-conjugating enzyme]-L-cysteine + [acceptor protein]-L-lysine = [E2 ubiquitin-conjugating enzyme]-L-cysteine + N(6)-ubiquitinyl-[acceptor protein]-L-lysine.. It functions in the pathway protein modification; protein ubiquitination. E3 ubiquitin-protein ligase which accepts ubiquitin from an E2 ubiquitin-conjugating enzyme in the form of a thioester and then directly transfers the ubiquitin to targeted substrates. Probably involved in the regulatory network controlling carbon source utilization. Ubiquitinates 'Lys-528' of the uric acid/xanthine transporter uapA at the cell membrane, leading to its internalization, sorting into the endosomal pathway to the vacuolar lumen where it is eventually degraded. The protein is E3 ubiquitin-protein ligase RSP5 (hulA) of Emericella nidulans (strain FGSC A4 / ATCC 38163 / CBS 112.46 / NRRL 194 / M139) (Aspergillus nidulans).